The sequence spans 130 residues: Small ribosomal subunit protein uS9 (130 aa).

This sequence belongs to the universal ribosomal protein uS9 family.

This Clostridioides difficile (strain 630) (Peptoclostridium difficile) protein is Small ribosomal subunit protein uS9.